A 492-amino-acid polypeptide reads, in one-letter code: Probable cytosol aminopeptidase (492 aa).

Residues K262 and D267 each contribute to the Mn(2+) site. Residue K274 is part of the active site. Residues D286, D345, and E347 each coordinate Mn(2+). R349 is a catalytic residue.

The protein belongs to the peptidase M17 family. The cofactor is Mn(2+).

The protein resides in the cytoplasm. The enzyme catalyses Release of an N-terminal amino acid, Xaa-|-Yaa-, in which Xaa is preferably Leu, but may be other amino acids including Pro although not Arg or Lys, and Yaa may be Pro. Amino acid amides and methyl esters are also readily hydrolyzed, but rates on arylamides are exceedingly low.. It carries out the reaction Release of an N-terminal amino acid, preferentially leucine, but not glutamic or aspartic acids.. Functionally, presumably involved in the processing and regular turnover of intracellular proteins. Catalyzes the removal of unsubstituted N-terminal amino acids from various peptides. The sequence is that of Probable cytosol aminopeptidase from Acaryochloris marina (strain MBIC 11017).